A 257-amino-acid polypeptide reads, in one-letter code: Imidazole glycerol phosphate synthase subunit HisF (257 aa).

Active-site residues include Asp11 and Asp130.

This sequence belongs to the HisA/HisF family. Heterodimer of HisH and HisF.

Its subcellular location is the cytoplasm. It carries out the reaction 5-[(5-phospho-1-deoxy-D-ribulos-1-ylimino)methylamino]-1-(5-phospho-beta-D-ribosyl)imidazole-4-carboxamide + L-glutamine = D-erythro-1-(imidazol-4-yl)glycerol 3-phosphate + 5-amino-1-(5-phospho-beta-D-ribosyl)imidazole-4-carboxamide + L-glutamate + H(+). The protein operates within amino-acid biosynthesis; L-histidine biosynthesis; L-histidine from 5-phospho-alpha-D-ribose 1-diphosphate: step 5/9. IGPS catalyzes the conversion of PRFAR and glutamine to IGP, AICAR and glutamate. The HisF subunit catalyzes the cyclization activity that produces IGP and AICAR from PRFAR using the ammonia provided by the HisH subunit. The sequence is that of Imidazole glycerol phosphate synthase subunit HisF from Vibrio cholerae serotype O1 (strain ATCC 39541 / Classical Ogawa 395 / O395).